The sequence spans 919 residues: Phosphoenolpyruvate carboxylase (919 aa).

Active-site residues include histidine 138 and lysine 579.

Belongs to the PEPCase type 1 family. It depends on Mg(2+) as a cofactor.

The catalysed reaction is oxaloacetate + phosphate = phosphoenolpyruvate + hydrogencarbonate. Activity not stimulated by acetyl-CoA in the absence of any allosteric inhibitor, while the corresponding protein from E.coli is strongly stimulated. Functionally, forms oxaloacetate, a four-carbon dicarboxylic acid source for the tricarboxylic acid cycle. The polypeptide is Phosphoenolpyruvate carboxylase (ppc) (Corynebacterium glutamicum (strain ATCC 13032 / DSM 20300 / JCM 1318 / BCRC 11384 / CCUG 27702 / LMG 3730 / NBRC 12168 / NCIMB 10025 / NRRL B-2784 / 534)).